The following is a 608-amino-acid chain: Probable Ufm1-specific protease 2 (608 aa).

Catalysis depends on residues Cys441, Asp565, and His567.

The protein belongs to the peptidase C78 family.

Functionally, thiol protease which recognizes and hydrolyzes the peptide bond at the C-terminal Gly of UFM1, a ubiquitin-like modifier protein bound to a number of target proteins. Does not hydrolyze SUMO1 or ISG15 ubiquitin-like proteins. The protein is Probable Ufm1-specific protease 2 of Drosophila pseudoobscura pseudoobscura (Fruit fly).